The primary structure comprises 135 residues: Protein PilG (135 aa).

A Response regulatory domain is found at 9-125; sequence KVMVIDDSKT…ELLGAIKAHV (117 aa). Asp58 bears the 4-aspartylphosphate mark.

In terms of processing, phosphorylated.

In terms of biological role, plays an essential role in both cAMP-dependent and independent regulation of twitching motility. Regulates the cAMP-independent coordination of type IV pilus (T4P) biogenesis and retraction that plays a role in surface and host cell adhesion, colonization, biofilm maturation, virulence, and twitching. In addition, phosphorylated PilG is necessary for cAMP production via regulation of the adenylate cyclase CyaB. Acts therefore as a response regulator of the chemosensory system/Chp system. The chain is Protein PilG (pilG) from Pseudomonas aeruginosa (strain ATCC 15692 / DSM 22644 / CIP 104116 / JCM 14847 / LMG 12228 / 1C / PRS 101 / PAO1).